The sequence spans 1526 residues: Probable autotransporter YpjA (1526 aa).

The signal sequence occupies residues 1-29; that stretch reads MNRTSPYYCRRSVLSLLISALIYAPPGMA. The disordered stretch occupies residues 1173–1223; that stretch reads NSNWNLTNDVKPNPDPIPNPKPDPKPDPKPDPNPKPDPTPDPTPTPVPEKR. Basic and acidic residues predominate over residues 1194-1206; it reads PDPKPDPKPDPNP. Positions 1207-1219 are enriched in pro residues; the sequence is KPDPTPDPTPTPV. Residues 1258-1526 form the Autotransporter domain; it reads ASPHNNNVWG…NAVAGVNWSF (269 aa).

The protein resides in the cell outer membrane. In terms of biological role, upon overexpression shows increased adherence to polyvinyl chloride (PVC) plates, increased mature biofilm formation. The polypeptide is Probable autotransporter YpjA (ypjA) (Escherichia coli (strain K12)).